The sequence spans 480 residues: Glutamyl-tRNA(Gln) amidotransferase subunit A (480 aa).

Catalysis depends on charge relay system residues K74 and S149. S173 acts as the Acyl-ester intermediate in catalysis.

It belongs to the amidase family. GatA subfamily. Heterotrimer of A, B and C subunits.

The enzyme catalyses L-glutamyl-tRNA(Gln) + L-glutamine + ATP + H2O = L-glutaminyl-tRNA(Gln) + L-glutamate + ADP + phosphate + H(+). Functionally, allows the formation of correctly charged Gln-tRNA(Gln) through the transamidation of misacylated Glu-tRNA(Gln) in organisms which lack glutaminyl-tRNA synthetase. The reaction takes place in the presence of glutamine and ATP through an activated gamma-phospho-Glu-tRNA(Gln). This is Glutamyl-tRNA(Gln) amidotransferase subunit A from Ruthia magnifica subsp. Calyptogena magnifica.